A 150-amino-acid polypeptide reads, in one-letter code: Large ribosomal subunit protein bL9 (150 aa).

Belongs to the bacterial ribosomal protein bL9 family.

In terms of biological role, binds to the 23S rRNA. The protein is Large ribosomal subunit protein bL9 of Limosilactobacillus fermentum (strain NBRC 3956 / LMG 18251) (Lactobacillus fermentum).